A 151-amino-acid polypeptide reads, in one-letter code: Calcium-binding protein SPEC 2C (151 aa).

EF-hand domains are found at residues 10–45, 46–78, 81–116, and 118–151; these read EQRKVFKSSFKSIDADGDGKITPEELKAAFKSIEIE, LTQEKIDEMMSMVDKDGSRPVDFSEILMKKAEQ, GKGAQYFKAFDALDTDKSGSLSPEELRTALSACTDP, and MTKEEIDAIIKKADGNNDGEIRRAEFVRMIQSSY. Ca(2+)-binding residues include Asp23, Asp25, Asp27, Lys29, Glu34, Asp59, Asp61, Ser63, Glu70, Asp94, Asp96, Ser98, Ser100, Glu105, Asp131, Asp135, Glu137, and Glu142.

In terms of tissue distribution, found in cell lineages giving rise to the aboral ectoderm, a squamous epithelium covering the surface of the late stage embryo and larva.

Its function is as follows. Calcium-binding protein involved in larval development and metamorphosis. Likely to function as calcium buffers mediating the transport of calcium from the sea water to the blastocoel where calcium is required for skeleton formation. The polypeptide is Calcium-binding protein SPEC 2C (SPEC2C) (Strongylocentrotus purpuratus (Purple sea urchin)).